Reading from the N-terminus, the 156-residue chain is Small ribosomal subunit protein uS7 (156 aa).

The protein belongs to the universal ribosomal protein uS7 family. In terms of assembly, part of the 30S ribosomal subunit. Contacts proteins S9 and S11.

One of the primary rRNA binding proteins, it binds directly to 16S rRNA where it nucleates assembly of the head domain of the 30S subunit. Is located at the subunit interface close to the decoding center, probably blocks exit of the E-site tRNA. This Aliivibrio salmonicida (strain LFI1238) (Vibrio salmonicida (strain LFI1238)) protein is Small ribosomal subunit protein uS7.